The primary structure comprises 262 residues: Acyl-[acyl-carrier-protein]--UDP-N-acetylglucosamine O-acyltransferase (262 aa).

The protein belongs to the transferase hexapeptide repeat family. LpxA subfamily. Homotrimer.

Its subcellular location is the cytoplasm. It catalyses the reaction a (3R)-hydroxyacyl-[ACP] + UDP-N-acetyl-alpha-D-glucosamine = a UDP-3-O-[(3R)-3-hydroxyacyl]-N-acetyl-alpha-D-glucosamine + holo-[ACP]. It participates in glycolipid biosynthesis; lipid IV(A) biosynthesis; lipid IV(A) from (3R)-3-hydroxytetradecanoyl-[acyl-carrier-protein] and UDP-N-acetyl-alpha-D-glucosamine: step 1/6. In terms of biological role, involved in the biosynthesis of lipid A, a phosphorylated glycolipid that anchors the lipopolysaccharide to the outer membrane of the cell. In Shigella dysenteriae serotype 1 (strain Sd197), this protein is Acyl-[acyl-carrier-protein]--UDP-N-acetylglucosamine O-acyltransferase.